Reading from the N-terminus, the 635-residue chain is 1-deoxy-D-xylulose-5-phosphate synthase (635 aa).

Residues His-72 and Gly-113–Ala-115 contribute to the thiamine diphosphate site. Asp-144 provides a ligand contact to Mg(2+). Thiamine diphosphate-binding positions include Gly-145–Ala-146, Asn-174, Tyr-287, and Glu-370. Asn-174 is a Mg(2+) binding site.

This sequence belongs to the transketolase family. DXPS subfamily. In terms of assembly, homodimer. The cofactor is Mg(2+). Thiamine diphosphate is required as a cofactor.

The enzyme catalyses D-glyceraldehyde 3-phosphate + pyruvate + H(+) = 1-deoxy-D-xylulose 5-phosphate + CO2. It participates in metabolic intermediate biosynthesis; 1-deoxy-D-xylulose 5-phosphate biosynthesis; 1-deoxy-D-xylulose 5-phosphate from D-glyceraldehyde 3-phosphate and pyruvate: step 1/1. Functionally, catalyzes the acyloin condensation reaction between C atoms 2 and 3 of pyruvate and glyceraldehyde 3-phosphate to yield 1-deoxy-D-xylulose-5-phosphate (DXP). The sequence is that of 1-deoxy-D-xylulose-5-phosphate synthase from Trichormus variabilis (strain ATCC 29413 / PCC 7937) (Anabaena variabilis).